Reading from the N-terminus, the 186-residue chain is Ribosome-recycling factor (186 aa).

Belongs to the RRF family.

The protein localises to the cytoplasm. Responsible for the release of ribosomes from messenger RNA at the termination of protein biosynthesis. May increase the efficiency of translation by recycling ribosomes from one round of translation to another. The polypeptide is Ribosome-recycling factor (Brucella abortus (strain S19)).